A 243-amino-acid polypeptide reads, in one-letter code: UPF0702 transmembrane protein YkjA (243 aa).

A run of 3 helical transmembrane segments spans residues 3–23 (WMVW…YILF), 34–54 (MNNF…EPIL), and 58–78 (LPMS…MSKL).

Belongs to the UPF0702 family.

It localises to the cell membrane. The chain is UPF0702 transmembrane protein YkjA (ykjA) from Bacillus subtilis (strain 168).